The chain runs to 417 residues: Serine hydroxymethyltransferase 3 (417 aa).

(6S)-5,6,7,8-tetrahydrofolate contacts are provided by residues Leu-121 and 125–127 (GHL). Position 229 is an N6-(pyridoxal phosphate)lysine (Lys-229). 354–356 (SPF) contacts (6S)-5,6,7,8-tetrahydrofolate.

It belongs to the SHMT family. As to quaternary structure, homodimer. Pyridoxal 5'-phosphate serves as cofactor.

The protein resides in the cytoplasm. It carries out the reaction (6R)-5,10-methylene-5,6,7,8-tetrahydrofolate + glycine + H2O = (6S)-5,6,7,8-tetrahydrofolate + L-serine. It participates in one-carbon metabolism; tetrahydrofolate interconversion. Its pathway is amino-acid biosynthesis; glycine biosynthesis; glycine from L-serine: step 1/1. In terms of biological role, catalyzes the reversible interconversion of serine and glycine with tetrahydrofolate (THF) serving as the one-carbon carrier. This reaction serves as the major source of one-carbon groups required for the biosynthesis of purines, thymidylate, methionine, and other important biomolecules. Also exhibits THF-independent aldolase activity toward beta-hydroxyamino acids, producing glycine and aldehydes, via a retro-aldol mechanism. This chain is Serine hydroxymethyltransferase 3, found in Pseudomonas aeruginosa (strain ATCC 15692 / DSM 22644 / CIP 104116 / JCM 14847 / LMG 12228 / 1C / PRS 101 / PAO1).